Here is a 261-residue protein sequence, read N- to C-terminus: Probable trans-aconitate 2-methyltransferase (261 aa).

The protein belongs to the methyltransferase superfamily. Tam family.

It localises to the cytoplasm. The enzyme catalyses trans-aconitate + S-adenosyl-L-methionine = (E)-3-(methoxycarbonyl)pent-2-enedioate + S-adenosyl-L-homocysteine. Catalyzes the S-adenosylmethionine monomethyl esterification of trans-aconitate. The protein is Probable trans-aconitate 2-methyltransferase of Mycobacterium bovis (strain ATCC BAA-935 / AF2122/97).